A 355-amino-acid polypeptide reads, in one-letter code: N-acetyl-gamma-glutamyl-phosphate reductase (355 aa).

The active site involves Cys-152.

It belongs to the NAGSA dehydrogenase family. Type 1 subfamily.

It is found in the cytoplasm. It catalyses the reaction N-acetyl-L-glutamate 5-semialdehyde + phosphate + NADP(+) = N-acetyl-L-glutamyl 5-phosphate + NADPH + H(+). It functions in the pathway amino-acid biosynthesis; L-arginine biosynthesis; N(2)-acetyl-L-ornithine from L-glutamate: step 3/4. Functionally, catalyzes the NADPH-dependent reduction of N-acetyl-5-glutamyl phosphate to yield N-acetyl-L-glutamate 5-semialdehyde. This Psychrobacter arcticus (strain DSM 17307 / VKM B-2377 / 273-4) protein is N-acetyl-gamma-glutamyl-phosphate reductase.